Reading from the N-terminus, the 83-residue chain is UPF0248 protein PYRAB10580 (83 aa).

Belongs to the UPF0248 family.

The chain is UPF0248 protein PYRAB10580 from Pyrococcus abyssi (strain GE5 / Orsay).